The primary structure comprises 485 residues: Sodium-coupled neutral amino acid symporter 1 (485 aa).

Residues 1-74 lie on the Cytoplasmic side of the membrane; it reads MMHFKSGLEL…EYIPGTTSLG (74 aa). Ser-6 is subject to Phosphoserine. Thr-11 bears the Phosphothreonine mark. Residues Ser-25, Ser-28, Ser-49, and Ser-52 each carry the phosphoserine modification. Thr-54 is modified (phosphothreonine). Ser-56 is subject to Phosphoserine. A helical transmembrane segment spans residues 75 to 97; the sequence is MSVFNLSNAIMGSGILGLAFALA. Residues 98–112 are Extracellular-facing; it reads NTGILLFLILLTSVT. The helical transmembrane segment at 113 to 133 threads the bilayer; that stretch reads LLSIYSINLLLICSKETGCMV. The Cytoplasmic portion of the chain corresponds to 134–148; that stretch reads YEKLGEQVFGTTGKL. Residues 149–169 traverse the membrane as a helical segment; the sequence is VIFGATSLQNTGAMLSYLFIV. Over 170–188 the chain is Extracellular; it reads KNELPSAIKSLMGEEETFS. The helical transmembrane segment at 189-211 threads the bilayer; that stretch reads AWYVDGRVLVVMVTFGIILPLCL. Residues 212-216 lie on the Cytoplasmic side of the membrane; the sequence is LKNLG. A helical membrane pass occupies residues 217–237; that stretch reads YLGYTSGFSLSCMVFFLIVVI. The Extracellular segment spans residues 238 to 273; that stretch reads YKKFQIPCMNGEQNSTVSANVTDACTPKYVTFNSKT. Residues Cys-245 and Cys-262 are joined by a disulfide bond. 2 N-linked (GlcNAc...) asparagine glycosylation sites follow: Asn-251 and Asn-257. A helical transmembrane segment spans residues 274-294; it reads VYALPTIAFAFVCHPSVLPIY. The Cytoplasmic portion of the chain corresponds to 295–310; it reads SELKDRSQKKMQMVSN. A helical transmembrane segment spans residues 311-331; the sequence is ISFFAMFVMYFLTAIFGYLTF. Topologically, residues 332 to 348 are extracellular; sequence YEKVQSDLLHKYQSTGD. The helical transmembrane segment at 349-369 threads the bilayer; sequence ILILTVRLAVIVAVILTVPVL. Over 370–391 the chain is Cytoplasmic; that stretch reads FFTVRSSLFELAKKTKFHLCRH. The helical transmembrane segment at 392–412 threads the bilayer; the sequence is VLVTIILLVIINLLVIFIPSM. Residues 413–414 lie on the Extracellular side of the membrane; that stretch reads KD. Residues 415–435 traverse the membrane as a helical segment; the sequence is IFGVVGVTSANMLIFILPSSL. Residues 436–450 lie on the Cytoplasmic side of the membrane; sequence YLKITNQDGDKNTQR. Residues 451-471 form a helical membrane-spanning segment; sequence IWAALFLALGVLFSLISIPLV. Residues 472–485 are Extracellular-facing; the sequence is IYDWACSSSNGEGH.

The protein belongs to the amino acid/polyamine transporter 2 family. In terms of processing, N-glycosylation plays an important role in the L-glutamine transport. Specifically expressed in brain with the highest levels in cerebellum and thalamus (at protein level). Expressed in glutamatergic, GABAergic and a subset of dopaminergic neurons of the substantia nigra and cholinergic motoneurons (at protein level). Also expressed by ependymal cells lining the ventricle (at protein level). Expression is also detected in spinal cord, heart, colon and placenta.

The protein resides in the cell membrane. It catalyses the reaction L-glutamine(in) + Na(+)(in) = L-glutamine(out) + Na(+)(out). It carries out the reaction L-alanine(in) + Na(+)(in) = L-alanine(out) + Na(+)(out). The enzyme catalyses L-asparagine(in) + Na(+)(in) = L-asparagine(out) + Na(+)(out). The catalysed reaction is L-histidine(in) + Na(+)(in) = L-histidine(out) + Na(+)(out). It catalyses the reaction L-serine(in) + Na(+)(in) = L-serine(out) + Na(+)(out). It carries out the reaction L-cysteine(in) + Na(+)(in) = L-cysteine(out) + Na(+)(out). The enzyme catalyses L-methionine(in) + Na(+)(in) = L-methionine(out) + Na(+)(out). The catalysed reaction is glycine(in) + Na(+)(in) = glycine(out) + Na(+)(out). It catalyses the reaction L-threonine(in) + Na(+)(in) = L-threonine(out) + Na(+)(out). It carries out the reaction L-proline(in) + Na(+)(in) = L-proline(out) + Na(+)(out). Its activity is regulated as follows. Inhibited by alpha-(methylamino)isobutyric acid (MeAIB). Inhibited by lithium, potassium, choline ions, N-methylglucamine. The pH dependence has an allosteric effect on the transport. In terms of biological role, symporter that cotransports short-chain neutral amino acids and sodium ions from the extraccellular to the intracellular side of the cell membrane. The transport is elctrogenic, pH dependent and driven by the Na(+) electrochemical gradient. Participates in the astroglia-derived glutamine transport into GABAergic interneurons for neurotransmitter GABA de novo synthesis. May also contributes to amino acid transport in placental trophoblast. Regulates synaptic plasticity. This is Sodium-coupled neutral amino acid symporter 1 from Rattus norvegicus (Rat).